The following is a 1129-amino-acid chain: Eukaryotic translation initiation factor 3 subunit A (1129 aa).

The 184-residue stretch at Leu319–Thr502 folds into the PCI domain. Disordered regions lie at residues Asn590–Gln633 and Ala836–Arg1129. 5 stretches are compositionally biased toward basic and acidic residues: residues Ala836–Arg903, Asp923–Asp964, Trp971–Gly985, Gly994–Gln1044, and Asp1053–Arg1076. Residues Pro1080–Asn1091 show a composition bias toward gly residues. Residues Pro1098–Asp1119 show a composition bias toward basic and acidic residues.

The protein belongs to the eIF-3 subunit A family. In terms of assembly, component of the eukaryotic translation initiation factor 3 (eIF-3) complex. The eIF-3 complex interacts with pix.

The protein localises to the cytoplasm. RNA-binding component of the eukaryotic translation initiation factor 3 (eIF-3) complex, which is involved in protein synthesis of a specialized repertoire of mRNAs and, together with other initiation factors, stimulates binding of mRNA and methionyl-tRNAi to the 40S ribosome. The eIF-3 complex specifically targets and initiates translation of a subset of mRNAs involved in cell proliferation. This chain is Eukaryotic translation initiation factor 3 subunit A, found in Drosophila mojavensis (Fruit fly).